Reading from the N-terminus, the 215-residue chain is Small ribosomal subunit protein uS7 (215 aa).

Belongs to the universal ribosomal protein uS7 family. As to quaternary structure, part of the 30S ribosomal subunit.

In terms of biological role, one of the primary rRNA binding proteins, it binds directly to 16S rRNA where it nucleates assembly of the head domain of the 30S subunit. Is located at the subunit interface close to the decoding center. The protein is Small ribosomal subunit protein uS7 of Thermococcus celer.